We begin with the raw amino-acid sequence, 655 residues long: MARSTIVLRGLRREYPSGEATVVALRDLDLTIEPGEMVAVMGASGSGKSTLMNILGCLDRPSSGSYQIAGRETASLDADELAALRREHFGFIFQRYHLLPELSALSNVEIPAIYAGQSRDERRDRANGLLARLGITDRASHRPNQLSGGQQQRVSIARALMNGADVILADEPTGALDRRSGDEVLRILDELHADGKTVIIVTHDASVAARAKRVIELSDGVVIADRATSTVSPAVAAPTAAAAQAQPRSRWPWQSRLDRIGEAFRMAMLAMAAHRLRTFLTMLGIIIGIASVVFIVAVGDAAKRKVLADISSLGTNTIEIFPGKDLGDVRSSKIKTLVVADARALRLQPYIDGVTPTVSTSSTLRHGPLEANALVNGVGDQYFAVKGTKLSAGRFFDADGLRDVSQDVVIDEKTRQTFFSDDPDGPIGKVLLVGRVPCRIIGVTQQQQGGFGSSQNLSVYLPYTTVQARFLGNSSLRSILVKVNDEVTTKAAELDVTRFLTLRHRVKDFVILNTDDIRKTITNTTETLTLMIAAIAVISLVVGGIGVMNIMLVSVSERVGEIGVRMAVGARRSDILQQFLIEAVMVCLIGGGLGVAVAYGLAATFNALVPMFQLGLSAGSIIAAFICSTGIGVVFGYLPARQASFLDPLAALSRD.

One can recognise an ABC transporter domain in the interval 6 to 244 (IVLRGLRREY…VAAPTAAAAQ (239 aa)). 42-49 (GASGSGKS) is a binding site for ATP. Transmembrane regions (helical) follow at residues 279–299 (FLTM…VAVG), 528–548 (LTLM…IGVM), 579–599 (FLIE…AVAY), and 618–638 (AGSI…FGYL).

It belongs to the ABC transporter superfamily. Macrolide exporter (TC 3.A.1.122) family. As to quaternary structure, homodimer.

It is found in the cell inner membrane. Non-canonical ABC transporter that contains transmembrane domains (TMD), which form a pore in the inner membrane, and an ATP-binding domain (NBD), which is responsible for energy generation. Confers resistance against macrolides. The protein is Macrolide export ATP-binding/permease protein MacB of Rhodopseudomonas palustris (strain BisB18).